A 259-amino-acid chain; its full sequence is Zinc import ATP-binding protein ZnuC (259 aa).

In terms of domain architecture, ABC transporter spans 6 to 223 (VTVQSVSVTL…PAYHELFGPG (218 aa)). 38 to 45 (GPNGAGKS) provides a ligand contact to ATP. Positions 230–259 (ALYTHDHDHDHDLHGNATHSHDHNGPCNHD) are disordered. The span at 233-259 (THDHDHDHDLHGNATHSHDHNGPCNHD) shows a compositional bias: basic and acidic residues.

This sequence belongs to the ABC transporter superfamily. Zinc importer (TC 3.A.1.15.5) family. As to quaternary structure, the complex is composed of two ATP-binding proteins (ZnuC), two transmembrane proteins (ZnuB) and a solute-binding protein (ZnuA).

The protein localises to the cell inner membrane. The catalysed reaction is Zn(2+)(out) + ATP(in) + H2O(in) = Zn(2+)(in) + ADP(in) + phosphate(in) + H(+)(in). In terms of biological role, part of the ABC transporter complex ZnuABC involved in zinc import. Responsible for energy coupling to the transport system. The sequence is that of Zinc import ATP-binding protein ZnuC from Alcanivorax borkumensis (strain ATCC 700651 / DSM 11573 / NCIMB 13689 / SK2).